The sequence spans 149 residues: MQVILLDKIGNLGGLGDQVNVKAGYARNFLIPQGKVVMATKANVEMFETRRAELEANVAKQLAAAEARAESVNALEVTIASKSGDEGKLFGSIGNRDIADAATAAGVAIAKSEVRLPEGALRTTGSFEVSIQLHSEVFATLKLEVVAAE.

Belongs to the bacterial ribosomal protein bL9 family.

Binds to the 23S rRNA. The sequence is that of Large ribosomal subunit protein bL9 from Aliivibrio salmonicida (strain LFI1238) (Vibrio salmonicida (strain LFI1238)).